An 873-amino-acid polypeptide reads, in one-letter code: V-type proton ATPase 116 kDa subunit a 2 (873 aa).

Residues 1 to 407 (MGSLSRSEEM…TIITFPFLFS (407 aa)) lie on the Cytoplasmic side of the membrane. A helical transmembrane segment spans residues 408 to 428 (CMFGDLGHGCIMLMAGLWFVL). At 429–445 (REKNLQARNIKDEIFNM) the chain is on the lumenal side. A helical membrane pass occupies residues 446–466 (FFGGRYIILLMGLFSIHAGII). The Cytoplasmic portion of the chain corresponds to 467–543 (YNDMFAKSFN…NKLNFLNSMK (77 aa)). Residues 544–564 (MKLSVILGISQMTFGVILSFF) form a helical membrane-spanning segment. 2 N-linked (GlcNAc...) asparagine glycosylation sites follow: Asn-565 and Asn-569. Residues 565–574 (NHTYNKSKID) lie on the Lumenal side of the membrane. Residues 575–595 (IFTVFIPQMLFMGCIFMYLCL) traverse the membrane as a helical segment. At 596 to 614 (QIILKWLFFWTKEATVFGQ) the chain is on the cytoplasmic side. The chain crosses the membrane as a helical span at residues 615–635 (IYPGSHCAPSLLIGLINMFMM). At 636 to 668 (KDRNAGFVVDGGKVNGEYREVETCYLSQWYPGQ) the chain is on the lumenal side. The chain crosses the membrane as a helical span at residues 669–689 (SVIEMILVVIAVICVPVMLFG). The Cytoplasmic segment spans residues 690 to 785 (KPIHHVMQQK…LWALSLAHAQ (96 aa)). A helical membrane pass occupies residues 786-806 (LSEVLWHMVFVTGGLGISGTA). A topological domain (lumenal) is located at residue Gly-807. Residues 808–828 (FIAVYVVFFIFFVLTISILVL) traverse the membrane as a helical segment. The Cytoplasmic portion of the chain corresponds to 829 to 873 (MEGLSAFLHTLRLHWVEFQSKFYLGLGYPFVPYSFKTALQEAEAA).

It belongs to the V-ATPase 116 kDa subunit family. As to quaternary structure, V-ATPase is a heteromultimeric enzyme made up of two complexes: the ATP-hydrolytic V1 complex and the proton translocation V0 complex. The V1 complex consists of three catalytic AB heterodimers that form a heterohexamer, three peripheral stalks each consisting of EG heterodimers, one central rotor including subunits D and F, and the regulatory subunits C and H. The proton translocation complex V0 consists of the proton transport subunit a, a ring of proteolipid subunits c9c'', rotary subunit d, subunits e and f, and the accessory subunits vah-19/Ac45 and vah-20/PRR. Interacts with V-type proton ATPase subunit C vha-11. As to expression, expressed in the H-shaped excretory cell (at protein level). Expressed in hypodermal cells around the vulva. Expressed in the main epidermal syncytium. Expressed in the sheath cells associated with head and tail sensory organs; specifically, expressed in the apical sheath cells of the amphids and CEP neuron and in the sheath cells of the OLQ sensory organ.

The protein resides in the apical cell membrane. It is found in the endosome. The protein localises to the multivesicular body membrane. Subunit of the V0 complex of vacuolar(H+)-ATPase (V-ATPase), a multisubunit enzyme composed of a peripheral complex (V1) that hydrolyzes ATP and a membrane integral complex (V0) that translocates protons. V-ATPase is responsible for acidifying and maintaining the pH of intracellular compartments and in some cell types, is targeted to the plasma membrane, where it is responsible for acidifying the extracellular environment. Involved in the assembly of the V-ATPase complex. The V-ATPase is required for the function of the excretory canal. Independently of the V1 complex, the V0 complex of the V-ATPase is required for multivesicular body membrane fusion with the apical membrane of the epidermal cells during exosome release and thus regulates the release of cuticle components such as Hedgehog-related peptide wrt-2 but not collagen. Also, in the epidermis, regulates the trafficking of che-14 and rdy-2. Regulates the secretion of granular material found in the amphid channel and in controlling osmoregulation in the amphid pocket. The protein is V-type proton ATPase 116 kDa subunit a 2 of Caenorhabditis elegans.